The sequence spans 142 residues: Large ribosomal subunit protein uL11 (142 aa).

The protein belongs to the universal ribosomal protein uL11 family. In terms of assembly, part of the ribosomal stalk of the 50S ribosomal subunit. Interacts with L10 and the large rRNA to form the base of the stalk. L10 forms an elongated spine to which L12 dimers bind in a sequential fashion forming a multimeric L10(L12)X complex. One or more lysine residues are methylated.

Forms part of the ribosomal stalk which helps the ribosome interact with GTP-bound translation factors. This chain is Large ribosomal subunit protein uL11, found in Ruthia magnifica subsp. Calyptogena magnifica.